A 526-amino-acid polypeptide reads, in one-letter code: 1,4-beta-D-glucan cellobiohydrolase B (526 aa).

Positions 1 to 23 are cleaved as a signal peptide; sequence MASSFQLYKALLFFSSLLSAVQA. A catalytic region spans residues 24–458; sequence QKVGTQQAEV…SNIKFGPIGS (435 aa). Glu235 acts as the Nucleophile in catalysis. Glu240 (proton donor) is an active-site residue. 2 N-linked (GlcNAc...) asparagine glycosylation sites follow: Asn293 and Asn400. Positions 459 to 490 are ser/Thr-rich linker; sequence TFGNGGGSGPTTTVTTSTATSTTSSATSTATG. Residues 464–488 form a disordered region; the sequence is GGSGPTTTVTTSTATSTTSSATSTA. Positions 468–488 are enriched in low complexity; it reads PTTTVTTSTATSTTSSATSTA. The 37-residue stretch at 490-526 folds into the CBM1 domain; sequence GQAQHWEQCGGNGWTGPTVCASPWACTVVNSWYSQCL. 2 cysteine pairs are disulfide-bonded: Cys498-Cys515 and Cys509-Cys525.

Belongs to the glycosyl hydrolase 7 (cellulase C) family.

The protein resides in the secreted. It carries out the reaction Hydrolysis of (1-&gt;4)-beta-D-glucosidic linkages in cellulose and cellotetraose, releasing cellobiose from the non-reducing ends of the chains.. Its function is as follows. The biological conversion of cellulose to glucose generally requires three types of hydrolytic enzymes: (1) Endoglucanases which cut internal beta-1,4-glucosidic bonds; (2) Exocellobiohydrolases that cut the disaccharide cellobiose from the non-reducing end of the cellulose polymer chain; (3) Beta-1,4-glucosidases which hydrolyze the cellobiose and other short cello-oligosaccharides to glucose. This is 1,4-beta-D-glucan cellobiohydrolase B (cbhB) from Emericella nidulans (strain FGSC A4 / ATCC 38163 / CBS 112.46 / NRRL 194 / M139) (Aspergillus nidulans).